Here is a 396-residue protein sequence, read N- to C-terminus: Phosphoglycerate kinase (396 aa).

Substrate is bound by residues 22–24, Arg-37, 60–63, Arg-118, and Arg-151; these read DFN and HFGR. Residues Lys-201, Glu-322, and 352–355 contribute to the ATP site; that span reads GGDS.

This sequence belongs to the phosphoglycerate kinase family. As to quaternary structure, monomer.

It is found in the cytoplasm. The enzyme catalyses (2R)-3-phosphoglycerate + ATP = (2R)-3-phospho-glyceroyl phosphate + ADP. Its pathway is carbohydrate degradation; glycolysis; pyruvate from D-glyceraldehyde 3-phosphate: step 2/5. The sequence is that of Phosphoglycerate kinase from Wolbachia pipientis subsp. Culex pipiens (strain wPip).